A 185-amino-acid chain; its full sequence is NEDD8-conjugating enzyme UBE2F (185 aa).

A disordered region spans residues 1 to 21; sequence MLTLASKLKRDDGVKGSRTTS. Residues 1–29 are interaction with uba3; that stretch reads MLTLASKLKRDDGVKGSRTTSTTLDSMRR. The UBC core domain occupies 32–185; it reads VRDRLLVKEV…VEDYIKRYAR (154 aa). Cys-116 serves as the catalytic Glycyl thioester intermediate.

It belongs to the ubiquitin-conjugating enzyme family. UBE2F subfamily.

It carries out the reaction [E1 NEDD8-activating enzyme]-S-[NEDD8 protein]-yl-L-cysteine + [E2 NEDD8-conjugating enzyme]-L-cysteine = [E1 NEDD8-activating enzyme]-L-cysteine + [E2 NEDD8-conjugating enzyme]-S-[NEDD8-protein]-yl-L-cysteine.. It participates in protein modification; protein neddylation. Functionally, accepts the ubiquitin-like protein NEDD8 from the UBA3-NAE1 E1 complex and catalyzes its covalent attachment to other proteins. Together with the E3 ubiquitin ligase rnf7/rbx2, specifically neddylates cullin-5 (cul5). Does not neddylate cul1, cul2, cul3, cul4a or cul4b. In Xenopus laevis (African clawed frog), this protein is NEDD8-conjugating enzyme UBE2F (ube2f).